A 259-amino-acid polypeptide reads, in one-letter code: Ribonuclease PH (259 aa).

Residues arginine 88 and 126–128 (GTR) contribute to the phosphate site.

Belongs to the RNase PH family. As to quaternary structure, homohexameric ring arranged as a trimer of dimers.

The catalysed reaction is tRNA(n+1) + phosphate = tRNA(n) + a ribonucleoside 5'-diphosphate. Functionally, phosphorolytic 3'-5' exoribonuclease that plays an important role in tRNA 3'-end maturation. Removes nucleotide residues following the 3'-CCA terminus of tRNAs; can also add nucleotides to the ends of RNA molecules by using nucleoside diphosphates as substrates, but this may not be physiologically important. Probably plays a role in initiation of 16S rRNA degradation (leading to ribosome degradation) during starvation. This chain is Ribonuclease PH, found in Mycolicibacterium paratuberculosis (strain ATCC BAA-968 / K-10) (Mycobacterium paratuberculosis).